Reading from the N-terminus, the 501-residue chain is ATP synthase subunit beta (501 aa).

153–160 (GGAGVGKT) provides a ligand contact to ATP.

This sequence belongs to the ATPase alpha/beta chains family. F-type ATPases have 2 components, CF(1) - the catalytic core - and CF(0) - the membrane proton channel. CF(1) has five subunits: alpha(3), beta(3), gamma(1), delta(1), epsilon(1). CF(0) has three main subunits: a(1), b(2) and c(9-12). The alpha and beta chains form an alternating ring which encloses part of the gamma chain. CF(1) is attached to CF(0) by a central stalk formed by the gamma and epsilon chains, while a peripheral stalk is formed by the delta and b chains.

It is found in the cell inner membrane. It carries out the reaction ATP + H2O + 4 H(+)(in) = ADP + phosphate + 5 H(+)(out). In terms of biological role, produces ATP from ADP in the presence of a proton gradient across the membrane. The catalytic sites are hosted primarily by the beta subunits. In Cytophaga hutchinsonii (strain ATCC 33406 / DSM 1761 / CIP 103989 / NBRC 15051 / NCIMB 9469 / D465), this protein is ATP synthase subunit beta.